We begin with the raw amino-acid sequence, 448 residues long: Tubulin beta chain (448 aa).

GTP-binding residues include Gln11, Glu69, Ser138, Gly142, Thr143, Gly144, Asn204, and Asn226. Residue Glu69 coordinates Mg(2+).

Belongs to the tubulin family. In terms of assembly, dimer of alpha and beta chains. A typical microtubule is a hollow water-filled tube with an outer diameter of 25 nm and an inner diameter of 15 nM. Alpha-beta heterodimers associate head-to-tail to form protofilaments running lengthwise along the microtubule wall with the beta-tubulin subunit facing the microtubule plus end conferring a structural polarity. Microtubules usually have 13 protofilaments but different protofilament numbers can be found in some organisms and specialized cells. It depends on Mg(2+) as a cofactor.

It is found in the cytoplasm. It localises to the cytoskeleton. Its function is as follows. Tubulin is the major constituent of microtubules, a cylinder consisting of laterally associated linear protofilaments composed of alpha- and beta-tubulin heterodimers. Microtubules grow by the addition of GTP-tubulin dimers to the microtubule end, where a stabilizing cap forms. Below the cap, tubulin dimers are in GDP-bound state, owing to GTPase activity of alpha-tubulin. This chain is Tubulin beta chain (TUB1), found in Melampsora lini (Rust fungus).